The following is a 426-amino-acid chain: D-amino acid dehydrogenase (426 aa).

3 to 17 is a binding site for FAD; that stretch reads VVVLGAGVIGVTTAW.

The protein belongs to the DadA oxidoreductase family. FAD is required as a cofactor.

The catalysed reaction is a D-alpha-amino acid + A + H2O = a 2-oxocarboxylate + AH2 + NH4(+). Its pathway is amino-acid degradation; D-alanine degradation; NH(3) and pyruvate from D-alanine: step 1/1. Functionally, oxidative deamination of D-amino acids. The chain is D-amino acid dehydrogenase from Phenylobacterium zucineum (strain HLK1).